The primary structure comprises 134 residues: Global transcriptional regulator Spx (134 aa).

An intrachain disulfide couples Cys-10 to Cys-13.

The protein belongs to the ArsC family. Spx subfamily. As to quaternary structure, interacts with the C-terminal domain of the alpha subunit of the RNAP.

It localises to the cytoplasm. Functionally, global transcriptional regulator that plays a key role in stress response and exerts either positive or negative regulation of genes. Acts by interacting with the C-terminal domain of the alpha subunit of the RNA polymerase (RNAP). This interaction can enhance binding of RNAP to the promoter region of target genes and stimulate their transcription, or block interaction of RNAP with activator. In Streptococcus pyogenes serotype M1, this protein is Global transcriptional regulator Spx.